A 520-amino-acid polypeptide reads, in one-letter code: Putative transporter svop-1 (520 aa).

The Cytoplasmic portion of the chain corresponds to 1–85 (MGDKAILTEV…LGFGRFQLKL (85 aa)). The chain crosses the membrane as a helical span at residues 86 to 106 (SILTGMAWMADAMEMMLLSLI). At 107–120 (SPALACEWGISSVQ) the chain is on the extracellular side. The chain crosses the membrane as a helical span at residues 121 to 141 (QALVTTCVFSGMMLSSTFWGK). Over 142–157 (ICDRFGRRKGLTFSTL) the chain is Cytoplasmic. Residues 158–178 (VACIMGVISGMSPHFYVLLFF) traverse the membrane as a helical segment. Position 179 (Arg-179) is a topological domain, extracellular. A helical membrane pass occupies residues 180-200 (GLTGFGIGGVPQSVTLYAEFL). Residues 201–208 (PTAQRAKC) lie on the Cytoplasmic side of the membrane. Residues 209 to 229 (VVLIESFWAIGAVFEALLAYF) traverse the membrane as a helical segment. Topologically, residues 230–237 (VMESFGWR) are extracellular. Residues 238-258 (ALMFLSSLPLGIFAVASFWLP) traverse the membrane as a helical segment. At 259–319 (ESARFDMASG…LLSPDLRKTT (61 aa)) the chain is on the cytoplasmic side. Residues 320–340 (ILLWCIWAITAFSYYGMVLFT) form a helical membrane-spanning segment. Residues 341 to 372 (TVLFQSHDECHGGLFSNGTQMEVCQPLTRSDY) lie on the Extracellular side of the membrane. Residues 373-393 (FDLLSTTLAEFPGLIITVLII) traverse the membrane as a helical segment. Residues 394–410 (EWFGRKKTMALEYAVFA) lie on the Cytoplasmic side of the membrane. A helical transmembrane segment spans residues 411-431 (IFTFLLYFCLDRFTVTVLIFV). Topologically, residues 432-434 (ARA) are extracellular. A helical transmembrane segment spans residues 435-455 (FISGAFQCAYVYTPEVYPTTL). Topologically, residues 456–461 (RAVGLG) are cytoplasmic. A helical transmembrane segment spans residues 462 to 487 (TCSAMARIGAIVTPFIAQVASEKSLS). The Extracellular segment spans residues 488–489 (LP). Residues 490 to 509 (IGIYGTAAILGLIASLSLPI) traverse the membrane as a helical segment. Over 510–520 (ETKGRQMMDSH) the chain is Cytoplasmic.

It belongs to the major facilitator superfamily.

The protein localises to the membrane. This is Putative transporter svop-1 from Caenorhabditis elegans.